The chain runs to 206 residues: A-type ATP synthase subunit D (206 aa).

Belongs to the V-ATPase D subunit family. As to quaternary structure, has multiple subunits with at least A(3), B(3), C, D, E, F, H, I and proteolipid K(x).

The protein resides in the cell membrane. Functionally, component of the A-type ATP synthase that produces ATP from ADP in the presence of a proton gradient across the membrane. The protein is A-type ATP synthase subunit D of Methanococcoides burtonii (strain DSM 6242 / NBRC 107633 / OCM 468 / ACE-M).